The chain runs to 362 residues: Peptide chain release factor 2 (362 aa).

N5-methylglutamine is present on glutamine 250.

The protein belongs to the prokaryotic/mitochondrial release factor family. Methylated by PrmC. Methylation increases the termination efficiency of RF2.

Its subcellular location is the cytoplasm. In terms of biological role, peptide chain release factor 2 directs the termination of translation in response to the peptide chain termination codons UGA and UAA. This is Peptide chain release factor 2 from Clostridium perfringens (strain ATCC 13124 / DSM 756 / JCM 1290 / NCIMB 6125 / NCTC 8237 / Type A).